The chain runs to 297 residues: N-acetylmuramic acid 6-phosphate etherase (297 aa).

The SIS domain occupies 55–218 (AAKRYSKGGR…STGVMIKQGK (164 aa)). Glutamate 83 acts as the Proton donor in catalysis. Residue glutamate 114 is part of the active site.

Belongs to the GCKR-like family. MurNAc-6-P etherase subfamily. Homodimer.

It carries out the reaction N-acetyl-D-muramate 6-phosphate + H2O = N-acetyl-D-glucosamine 6-phosphate + (R)-lactate. It participates in amino-sugar metabolism; N-acetylmuramate degradation. Specifically catalyzes the cleavage of the D-lactyl ether substituent of MurNAc 6-phosphate, producing GlcNAc 6-phosphate and D-lactate. This Lactobacillus gasseri (strain ATCC 33323 / DSM 20243 / BCRC 14619 / CIP 102991 / JCM 1131 / KCTC 3163 / NCIMB 11718 / NCTC 13722 / AM63) protein is N-acetylmuramic acid 6-phosphate etherase.